Here is a 327-residue protein sequence, read N- to C-terminus: MATAMTVSSKLLGLLMQQLRGTRQLYFNVSLRSLSSSAQEASKRIPEEVSDHNYESIQVTSAQKHVLHVQLNRPEKRNAMNRAFWRELVECFQKISKDSDCRAVVVSGAGKMFTSGIDLMDMASDILQPPGDDVARIAWYLRDLISRYQKTFTVIEKCPKPVIAAIHGGCIGGGVDLISACDIRYCTQDAFFQVKEVDVGLAADVGTLQRLPKVIGNRSLVNELTFTARKMMADEALDSGLVSRVFPDKDVMLNAAFALAADISSKSPVAVQGSKINLIYSRDHSVDESLDYMATWNMSMLQTQDIIKSVQAAMEKKDSKSITFSKL.

The N-terminal 33 residues, M1–S33, are a transit peptide targeting the mitochondrion. Substrate is bound by residues S115–L119 and G173. N6-succinyllysine is present on K230. The residue at position 267 (S267) is a Phosphoserine. K316 carries the post-translational modification N6-succinyllysine. Residues S325–L327 carry the Microbody targeting signal motif. K326 is modified (N6-acetyllysine).

The protein belongs to the enoyl-CoA hydratase/isomerase family. Homohexamer. As to expression, expressed in heart and liver (at protein level).

Its subcellular location is the mitochondrion. It is found in the peroxisome. The catalysed reaction is (3E,5Z)-octadienoyl-CoA = (2E,4E)-octadienoyl-CoA. The enzyme catalyses (3E,5Z,8Z,11Z,14Z)-eicosapentaenoyl-CoA = (2E,4E,8Z,11Z,14Z)-eicosapentaenoyl-CoA. Its pathway is lipid metabolism; fatty acid beta-oxidation. Isomerization of 3-trans,5-cis-dienoyl-CoA to 2-trans,4-trans-dienoyl-CoA. The chain is Delta(3,5)-Delta(2,4)-dienoyl-CoA isomerase, mitochondrial from Rattus norvegicus (Rat).